Reading from the N-terminus, the 235-residue chain is Aspartate/glutamate leucyltransferase (235 aa).

It belongs to the R-transferase family. Bpt subfamily.

It localises to the cytoplasm. It carries out the reaction N-terminal L-glutamyl-[protein] + L-leucyl-tRNA(Leu) = N-terminal L-leucyl-L-glutamyl-[protein] + tRNA(Leu) + H(+). The enzyme catalyses N-terminal L-aspartyl-[protein] + L-leucyl-tRNA(Leu) = N-terminal L-leucyl-L-aspartyl-[protein] + tRNA(Leu) + H(+). Functions in the N-end rule pathway of protein degradation where it conjugates Leu from its aminoacyl-tRNA to the N-termini of proteins containing an N-terminal aspartate or glutamate. This is Aspartate/glutamate leucyltransferase from Pseudomonas syringae pv. tomato (strain ATCC BAA-871 / DC3000).